A 428-amino-acid chain; its full sequence is Anaerobic glycerol-3-phosphate dehydrogenase subunit B (428 aa).

It belongs to the anaerobic G-3-P dehydrogenase subunit B family. In terms of assembly, composed of a catalytic GlpA/B dimer and of membrane bound GlpC. The cofactor is FMN.

The enzyme catalyses a quinone + sn-glycerol 3-phosphate = dihydroxyacetone phosphate + a quinol. It functions in the pathway polyol metabolism; glycerol degradation via glycerol kinase pathway; glycerone phosphate from sn-glycerol 3-phosphate (anaerobic route): step 1/1. Conversion of glycerol 3-phosphate to dihydroxyacetone. Uses fumarate or nitrate as electron acceptor. The polypeptide is Anaerobic glycerol-3-phosphate dehydrogenase subunit B (Pasteurella multocida (strain Pm70)).